A 1238-amino-acid chain; its full sequence is uncharacterized protein (1238 aa).

Disordered stretches follow at residues 22 to 83 (LQSA…QEHL), 96 to 150 (SSRQ…IASP), 169 to 250 (FEPD…HQML), 264 to 694 (QLNS…AAMV), 739 to 915 (TKAA…SVPE), 936 to 955 (THSA…APHE), and 1057 to 1089 (PKIS…QCSS). Positions 35–49 (QPPNQQPHQTQQQQQ) are enriched in low complexity. Positions 58 to 72 (PSIQNLTTNATPTST) are enriched in polar residues. The segment covering 73 to 83 (QLQQQQQQEHL) has biased composition (low complexity). Over residues 96–110 (SSRQNQGAPSGNLSN) the composition is skewed to polar residues. The segment covering 125–145 (SVSGNTNHTGSNSSSNSGSNN) has biased composition (low complexity). Residues 188 to 204 (SASSASKLPTHNVQQQH) are compositionally biased toward polar residues. Low complexity-rich tracts occupy residues 272–287 (SYQH…QSHP), 309–334 (PLLT…SSQH), and 393–406 (SNEE…NSSN). The span at 433–450 (SKPQHPQQAANLNNSCSP) shows a compositional bias: polar residues. At Ser453 the chain carries Phosphoserine. Polar residues predominate over residues 463-472 (PFSTQKQSQT). The segment covering 523-536 (TEQHRMQQDDEPPK) has biased composition (basic and acidic residues). 2 stretches are compositionally biased toward low complexity: residues 549 to 570 (QSNS…SQSS) and 632 to 641 (TTAAVAAPPA). Thr642 carries the phosphothreonine modification. Residues 678–688 (ERISSPEKPAE) are compositionally biased toward basic and acidic residues. 3 positions are modified to phosphoserine: Ser682, Ser749, and Ser753. Polar residues predominate over residues 755-764 (IPQSRSTSTP). Phosphoserine is present on residues Ser793 and Ser799. Residues 832-860 (STSAAAAAALAARQLSEAASATKSKPAAG) are compositionally biased toward low complexity. The segment covering 861 to 874 (AKKKNAGVKGKKGS) has biased composition (basic residues). The segment covering 937 to 947 (HSAEDVNEKQT) has biased composition (basic and acidic residues). Polar residues predominate over residues 1071 to 1089 (DSSISYSDDPNESRSQCSS). The C2HC pre-PHD-type; degenerate zinc-finger motif lies at 1089–1131 (SVDLLDCSTESKFVETFRGMGKTSENGFEVWLHEDCAVWSNDI). Ser1099 carries the phosphoserine modification. The PHD-type zinc-finger motif lies at 1151–1199 (YQCVLCQQTGASICCFQRCCKAAAHVPCGRSANWSLSEEDRKVYCHLHR).

This is an uncharacterized protein from Drosophila melanogaster (Fruit fly).